Consider the following 394-residue polypeptide: Tetracycline resistance protein, class D (394 aa).

12 helical membrane-spanning segments follow: residues 6-26 (VIAL…MPVL), 42-62 (HYGI…PLLG), 73-93 (VLLL…LSNV), 94-114 (LWML…GAVA), 135-155 (GAAF…AGDI), 159-179 (LPFV…FFIF), 198-218 (GISF…FFTA), 243-263 (AVGF…AVVA), 274-294 (TIIF…SAIT), 296-316 (GWMV…LPAL), 335-355 (VLVS…AFIF), and 364-384 (GTVW…CLLI).

This sequence belongs to the major facilitator superfamily. TCR/Tet family.

Its subcellular location is the cell inner membrane. In terms of biological role, resistance to tetracycline by an active tetracycline efflux. This is an energy-dependent process that decreases the accumulation of the antibiotic in whole cells. This protein functions as a metal-tetracycline/H(+) antiporter. This is Tetracycline resistance protein, class D (tetA) from Salmonella ordonez.